We begin with the raw amino-acid sequence, 595 residues long: (E)-beta-ocimene synthase, chloroplastic (595 aa).

Residues 1-32 (MSTISINLMSIIRNPLHSKSKRALINKHPSSS) constitute a chloroplast transit peptide. Mn(2+)-binding residues include Asp-350 and Asp-354. The DDXXD motif signature appears at 350–354 (DDVYD). Homodimerization stretches follow at residues 356-362 (YGTLDEL) and 428-465 (EEEWYESGYTPSLKEYLNNASISVGAIAVVIALELSIP). Mn(2+) contacts are provided by Asn-493 and Glu-501.

This sequence belongs to the terpene synthase family. As to quaternary structure, homodimer. The cofactor is Mn(2+). Mg(2+) serves as cofactor. As to expression, expressed in peltate glandular trichomes. Present in flowers, leaves and stems.

It is found in the plastid. The protein localises to the chloroplast. It carries out the reaction (2E)-geranyl diphosphate = (E)-beta-ocimene + diphosphate. It functions in the pathway secondary metabolite biosynthesis; terpenoid biosynthesis. Its function is as follows. Involved in the biosynthesis of monoterpenes natural products. Monoterpene synthase that catalyzes mainly the formation of (E)-beta-ocimene and minor amounts of other monoterpenes (e.g. myrcene, (Z)-beta-ocimene, alpha- and gamma-terpinene) from geranyl diphosphate (GPP). This is (E)-beta-ocimene synthase, chloroplastic from Origanum vulgare (Wild marjoram).